The following is a 75-amino-acid chain: CLAVATA3/ESR (CLE)-related protein 2 (75 aa).

Residues 1 to 22 (MAKLSFTFCFLLFLLLSSIAAG) form the signal peptide. A disordered region spans residues 40–75 (PSIEATSPTVEDDQAAGSHGKSPERLSPGGPDPQHH). 2 positions are modified to hydroxyproline: proline 67 and proline 70. A glycan (O-linked (Ara...) hydroxyproline) is linked at proline 70.

It belongs to the CLV3/ESR signal peptide family. In terms of assembly, interacts with the extracellular leucine-rich repeat region of CLV1. In terms of processing, the O-glycosylation (arabinosylation) of the hydroxyproline Pro-70 enhances binding affinity of the CLE2p peptide for its receptor. In terms of tissue distribution, mostly expressed in roots and seedlings, and, to a lower extent, in apex.

The protein resides in the secreted. It localises to the extracellular space. Extracellular signal peptide that regulates cell fate. May act with CLV1 as a ligand-receptor pair in a signal transduction pathway, coordinating growth between adjacent meristematic regions. The sequence is that of CLAVATA3/ESR (CLE)-related protein 2 from Arabidopsis thaliana (Mouse-ear cress).